We begin with the raw amino-acid sequence, 257 residues long: Transcription factor MYB4 (257 aa).

HTH myb-type domains lie at 9–61 (KMGL…INYL) and 62–116 (RPDI…KKRL). 2 consecutive DNA-binding regions (H-T-H motif) follow at residues 37–61 (WRAL…INYL) and 89–112 (WSAI…HTHL). The interval 115 to 179 (RLDAPAQGGH…VAEEHGNAGI (65 aa)) is disordered. The span at 130–140 (GKKHKKPKSAK) shows a compositional bias: basic residues. The span at 141–170 (KPAAAAAAPPASPERSASSSVTESSMASSV) shows a compositional bias: low complexity.

The protein localises to the nucleus. In terms of biological role, transcriptional activator involved in cold stress response. Regulates positively the expression of genes involved in reactive oxygen species (ROS) scavenging such as peroxidase and superoxide dismutase during cold stress. Transactivates a complex gene network that have major effects on stress tolerance and panicle development. This chain is Transcription factor MYB4, found in Oryza sativa subsp. japonica (Rice).